The following is a 202-amino-acid chain: Superoxide dismutase [Mn] (202 aa).

Positions 27, 82, 164, and 168 each coordinate Mn(2+).

The protein belongs to the iron/manganese superoxide dismutase family. As to quaternary structure, homodimer. Requires Mn(2+) as cofactor.

It catalyses the reaction 2 superoxide + 2 H(+) = H2O2 + O2. Destroys superoxide anion radicals which are normally produced within the cells and which are toxic to biological systems. The protein is Superoxide dismutase [Mn] (sodA) of Listeria ivanovii.